Reading from the N-terminus, the 88-residue chain is Cell division topological specificity factor (88 aa).

Belongs to the MinE family.

Functionally, prevents the cell division inhibition by proteins MinC and MinD at internal division sites while permitting inhibition at polar sites. This ensures cell division at the proper site by restricting the formation of a division septum at the midpoint of the long axis of the cell. In Acidovorax ebreus (strain TPSY) (Diaphorobacter sp. (strain TPSY)), this protein is Cell division topological specificity factor.